Consider the following 854-residue polypeptide: Protein asteroid (854 aa).

Residues 368-427 (SEEECSDDEHSSSSDEKFSDVEEGEDQEEADNQDEEQQEENQDVDSGDEEEEEADEGLEL) are disordered. The span at 375 to 387 (DEHSSSSDEKFSD) shows a compositional bias: basic and acidic residues. The segment covering 388–427 (VEEGEDQEEADNQDEEQQEENQDVDSGDEEEEEADEGLEL) has biased composition (acidic residues).

Belongs to the asteroid family. Expressed in the proliferative tissues of embryos and in the mitotically active tissue anterior to the morphogenetic furrow in eye imaginal disks.

Its function is as follows. May function in EGF receptor signaling. May play a role in compound eye morphogenesis. The polypeptide is Protein asteroid (ast) (Drosophila melanogaster (Fruit fly)).